The following is a 251-amino-acid chain: Segregation and condensation protein A (251 aa).

This sequence belongs to the ScpA family. As to quaternary structure, component of a cohesin-like complex composed of ScpA, ScpB and the Smc homodimer, in which ScpA and ScpB bind to the head domain of Smc. The presence of the three proteins is required for the association of the complex with DNA.

It localises to the cytoplasm. Functionally, participates in chromosomal partition during cell division. May act via the formation of a condensin-like complex containing Smc and ScpB that pull DNA away from mid-cell into both cell halves. This Exiguobacterium sibiricum (strain DSM 17290 / CCUG 55495 / CIP 109462 / JCM 13490 / 255-15) protein is Segregation and condensation protein A.